A 208-amino-acid polypeptide reads, in one-letter code: Capsid protein (208 aa).

The segment covering 1-12 (MPPKRQNTETRK) has biased composition (basic and acidic residues). A disordered region spans residues 1–23 (MPPKRQNTETRKARQNRARRSRQ). Positions 13 to 22 (ARQNRARRSR) are enriched in basic residues.

The protein resides in the virion. Capsid protein self-assembles to form a quasi spherical capsid, about 25-35 nm. The protein is Capsid protein of Pelargonium zonate spot virus (isolate Tomato/Italy/1982) (PZSV).